Consider the following 300-residue polypeptide: Cation-efflux pump FieF (300 aa).

The next 4 helical transmembrane spans lie at 12 to 32 (AAIAATAMASLLLLIKIFAWW), 39 to 59 (ILAALVDSLVDIGASLTNLLV), 82 to 102 (AALAQSMFISGSALFLFLTGI), and 114 to 134 (PGVGVIVTIVALICTIILVSF). Positions 45 and 49 each coordinate Zn(2+). Zn(2+) contacts are provided by H153 and D157. The next 2 helical transmembrane spans lie at 156–176 (SDVMMNGAILLALGLSWYGWH) and 178–198 (ADALFALGIGIYILYSALRMG).

It belongs to the cation diffusion facilitator (CDF) transporter (TC 2.A.4) family. FieF subfamily. In terms of assembly, homodimer.

It is found in the cell inner membrane. It catalyses the reaction Zn(2+)(in) + H(+)(out) = Zn(2+)(out) + H(+)(in). The catalysed reaction is Cd(2+)(in) + H(+)(out) = Cd(2+)(out) + H(+)(in). The enzyme catalyses Fe(2+)(in) + H(+)(out) = Fe(2+)(out) + H(+)(in). Divalent metal cation transporter which exports Zn(2+), Cd(2+) and possibly Fe(2+). May be involved in zinc and iron detoxification by efflux. In Shigella flexneri serotype 5b (strain 8401), this protein is Cation-efflux pump FieF.